A 1226-amino-acid polypeptide reads, in one-letter code: AF4/FMR2 family member 3 (1226 aa).

Residues 24–37 show a composition bias toward basic and acidic residues; sequence RNALRRKERERRNQ. Disordered regions lie at residues 24-65, 116-164, 197-299, 323-496, and 523-728; these read RNAL…GDEL, SRAQ…RATQ, ERPP…GETN, KVEP…SNQY, and IKST…SINA. The span at 42 to 52 shows a compositional bias: polar residues; the sequence is DDGTFNSSYSL. Residues 123-132 are compositionally biased toward low complexity; it reads SSICSTTTST. Composition is skewed to polar residues over residues 251 to 261 and 334 to 344; these read LKSSSETSVHC and KDSQLVSSGHN. The segment covering 381–392 has biased composition (low complexity); sequence QQAAQRTALRAL. Residues 396–408 are compositionally biased toward polar residues; it reads AVVQQPNCRTSVP. Positions 409 to 445 are enriched in low complexity; that stretch reads SSKGSSSSSSSGSSSSSSDSESSSGSDSETESSSSES. Polar residues predominate over residues 485–496; sequence QNESHGSESNQY. Residues 523 to 533 are compositionally biased toward basic and acidic residues; the sequence is IKSTCKEEQRP. Low complexity-rich tracts occupy residues 550–561 and 569–579; these read PPAAVAVAVSAA and CAPAENAPAPA. A compositionally biased stretch (basic and acidic residues) spans 589 to 607; sequence RRTERTSAGDGANCHRPEE. A compositionally biased stretch (low complexity) spans 668–678; the sequence is TESSSSSSSSD. Positions 692–705 are enriched in polar residues; that stretch reads KAQTVAASASSGND. Phosphoserine is present on serine 755. 3 disordered regions span residues 783–856, 879–964, and 1100–1138; these read PQEP…LSAN, PISP…RDCK, and AAQA…SLSN. The segment covering 830 to 842 has biased composition (basic and acidic residues); it reads REIKKSQGEKDSS. Over residues 843–856 the composition is skewed to polar residues; it reads SRLATSTSNTLSAN. Serine 881 carries the phosphoserine modification. Polar residues predominate over residues 894–909; that stretch reads EDLTSSSRPNGNSLFT.

It belongs to the AF4 family. Preferentially expressed in lymphoid tissues, highest levels being found in the thymus.

It localises to the nucleus. Its function is as follows. Putative transcription activator that may function in lymphoid development and oncogenesis. Binds, in vitro, to double-stranded DNA. In Homo sapiens (Human), this protein is AF4/FMR2 family member 3.